A 301-amino-acid chain; its full sequence is General transcription and DNA repair factor IIH subunit TFB4 (301 aa).

A C4-type zinc finger spans residues 259–276 (CSVCLSIFCEHHKKCSTC).

The protein belongs to the TFB4 family. As to quaternary structure, component of the 7-subunit TFIIH core complex composed of XPB, XPD, TFB1/GTF2H1, GTF2H2/P44, TFB4/GTF2H3, TFB2/GTF2H4 and TFB5/GTF2H5, which is active in NER. The core complex associates with the 3-subunit CDK-activating kinase (CAK) module composed of CYCH1/cyclin H1, CDKD and MAT1/At4g30820 to form the 10-subunit holoenzyme (holo-TFIIH) active in transcription.

It localises to the nucleus. Functionally, component of the general transcription and DNA repair factor IIH (TFIIH) core complex, which is involved in general and transcription-coupled nucleotide excision repair (NER) of damaged DNA and, when complexed to CAK, in RNA transcription by RNA polymerase II. In NER, TFIIH acts by opening DNA around the lesion to allow the excision of the damaged oligonucleotide and its replacement by a new DNA fragment. In transcription, TFIIH has an essential role in transcription initiation. When the pre-initiation complex (PIC) has been established, TFIIH is required for promoter opening and promoter escape. Phosphorylation of the C-terminal tail (CTD) of the largest subunit of RNA polymerase II by the kinase module CAK controls the initiation of transcription. The sequence is that of General transcription and DNA repair factor IIH subunit TFB4 from Arabidopsis thaliana (Mouse-ear cress).